Reading from the N-terminus, the 308-residue chain is MRFSTALSLALAVSPAAVFAAGNLGFSLGVKRPDGQCKDQADFEKDFDTLKAHGTTVRTYAAADCGSASLILPAAKSKGFKVVLGIWPDVEESYKADVDALKKAVPGNEDVVAAITVGSETLYRGNFTGPELLKKIKEVQKVFPKITIGTADSWNKYADGTADALIEGGVKYLLVNAFAFWQGKAIEQAPKTLFDDLVGAAKRIADKAPQGSSPYVAIGETGWPTDGGTDYGAAKAGTKNAEKFYKEGVCAMLAWGVDAFYFEAFDEPWKPKSIGDNGNAADETHWGMYTADRKPKFNADCKVNKKKD.

The signal sequence occupies residues 1–20; that stretch reads MRFSTALSLALAVSPAAVFA. The active-site Proton donor is the E120. N-linked (GlcNAc...) asparagine glycosylation occurs at N126. The active-site Nucleophile is E220.

This sequence belongs to the glycosyl hydrolase 17 family.

Its subcellular location is the secreted. It is found in the cell wall. The protein localises to the cytoplasm. It catalyses the reaction Successive hydrolysis of beta-D-glucose units from the non-reducing ends of (1-&gt;3)-beta-D-glucans, releasing alpha-glucose.. Cell wall glucan 1,3-beta-glucosidase involved in cell wall biosynthesis and virulence. Crucial for delivery of beta-1,3-glucan to the biofilm matrix and for accumulation of mature matrix biomass. The sequence is that of Glucan 1,3-beta-glucosidase ARB_02797 from Arthroderma benhamiae (strain ATCC MYA-4681 / CBS 112371) (Trichophyton mentagrophytes).